A 435-amino-acid chain; its full sequence is Eukaryotic peptide chain release factor subunit 1-2 (435 aa).

Residue Ala2 is modified to N-acetylalanine.

It belongs to the eukaryotic release factor 1 family. As to quaternary structure, heterodimer of two subunits, one of which binds GTP. Interacts with OR.

The protein localises to the cytoplasm. In terms of biological role, directs the termination of nascent peptide synthesis (translation) in response to the termination codons UAA, UAG and UGA. Modulates plant growth and development. This is Eukaryotic peptide chain release factor subunit 1-2 from Brassica oleracea var. botrytis (Cauliflower).